A 605-amino-acid polypeptide reads, in one-letter code: IQ domain-containing protein IQM2 (605 aa).

Residues 105–134 (KHEAAIKLQKVYKSFRTRRKLADCAVLVEQ) form the IQ domain. The interval 408-505 (QDKVDPSGEE…EEGETKESEV (98 aa)) is disordered. Residues 425–440 (SISRKQSDLETPEKME) show a composition bias toward basic and acidic residues. Residues 462 to 480 (DYDSGDDEEEEEEMFELEQ) show a composition bias toward acidic residues. The span at 481–490 (ESMPSEQSSP) shows a compositional bias: low complexity. Basic and acidic residues predominate over residues 491–505 (RGEEKEEGETKESEV).

Expressed in rosette and cauline leaves, stems, flowers and siliques, and at lower levels in roots.

The protein localises to the cytoplasm. It is found in the nucleus. Its function is as follows. May be involved in biotic and abiotic stress responses. The chain is IQ domain-containing protein IQM2 from Arabidopsis thaliana (Mouse-ear cress).